Here is a 304-residue protein sequence, read N- to C-terminus: Cell surface-binding protein OPG105 (304 aa).

Residues 1 to 235 form the Alpha-carbonic anhydrase domain; the sequence is MPQQLSPINI…NDDTQVYYSG (235 aa). Residues 1 to 275 lie on the Virion surface side of the membrane; it reads MPQQLSPINI…YQKYIEGNKT (275 aa). Residues 276-294 form a helical membrane-spanning segment; it reads FAIIAIVFVFILTAILFLM. Topologically, residues 295-304 are intravirion; the sequence is SRRYSREKQN.

This sequence belongs to the alpha-carbonic anhydrase family. In terms of assembly, homodimer; disulfide-linked. Post-translationally, apparently non-glycosylated.

It localises to the virion membrane. Its function is as follows. Binds to chondroitin sulfate on the cell surface to provide virion attachment to target cell. In Rabbitpox virus (strain Utrecht) (RPV), this protein is Cell surface-binding protein OPG105 (OPG105).